The primary structure comprises 455 residues: Ribulose bisphosphate carboxylase large chain (455 aa).

Position 5 is an N6,N6,N6-trimethyllysine (lysine 5). Substrate is bound by residues asparagine 114 and threonine 164. Residue lysine 166 is the Proton acceptor of the active site. Substrate is bound at residue lysine 168. Lysine 192, aspartate 194, and glutamate 195 together coordinate Mg(2+). Position 192 is an N6-carboxylysine (lysine 192). The active-site Proton acceptor is histidine 285. Substrate-binding residues include arginine 286, histidine 318, and serine 370.

This sequence belongs to the RuBisCO large chain family. Type I subfamily. Heterohexadecamer of 8 large chains and 8 small chains; disulfide-linked. The disulfide link is formed within the large subunit homodimers. The cofactor is Mg(2+). The disulfide bond which can form in the large chain dimeric partners within the hexadecamer appears to be associated with oxidative stress and protein turnover.

Its subcellular location is the plastid. It localises to the chloroplast. The enzyme catalyses 2 (2R)-3-phosphoglycerate + 2 H(+) = D-ribulose 1,5-bisphosphate + CO2 + H2O. The catalysed reaction is D-ribulose 1,5-bisphosphate + O2 = 2-phosphoglycolate + (2R)-3-phosphoglycerate + 2 H(+). RuBisCO catalyzes two reactions: the carboxylation of D-ribulose 1,5-bisphosphate, the primary event in carbon dioxide fixation, as well as the oxidative fragmentation of the pentose substrate in the photorespiration process. Both reactions occur simultaneously and in competition at the same active site. The sequence is that of Ribulose bisphosphate carboxylase large chain from Vachellia farnesiana (Sweet acacia).